A 233-amino-acid chain; its full sequence is MVHRPRLLCLHGGGASSQIMRIQFSKLESALRKTFQLVFLEGPLDSAPGPGVLPFFKDFGPYSCWVSDDRSLSPEEKRQEETNAIAYIKTFMLQYGPFAGILGFSQGARAAASILLEQQREAFTHDSLFGVFFCGTFPPFIPDAPDISLPTIHVLGLTDPYLRESEVLLEHCTQQSVRRVIKFNGGHHMPTSSDVTQQIADVISMTYRTSQRKRVSGIWKKNVVDSRPSALEI.

Catalysis depends on charge relay system residues Ser-105, Asp-159, and His-187.

This sequence belongs to the LovG family.

Functionally, esterase; part of the gene cluster that mediates the biosynthesis of the mycotoxin fusarin C. Within the cluster, FUS1, FUS2, FUS8 and FUS9 are sufficient for fusarin production. The other FUS cluster members are not essential for fusarin C biosynthesis. The polypeptide is Esterase FUS5 (Gibberella moniliformis (strain M3125 / FGSC 7600) (Maize ear and stalk rot fungus)).